Reading from the N-terminus, the 1892-residue chain is Sodium channel protein type 4 subunit alpha A (1892 aa).

At methionine 1–serine 125 the chain is on the cytoplasmic side. The disordered stretch occupies residues alanine 34–alanine 54. The I repeat unit spans residues isoleucine 107–asparagine 433. Residues leucine 126–methionine 144 form a helical membrane-spanning segment. Over serine 145 to serine 151 the chain is Extracellular. A helical transmembrane segment spans residues lysine 152–serine 172. Residues arginine 173 to proline 186 lie on the Cytoplasmic side of the membrane. Residues tryptophan 187–valine 204 form a helical membrane-spanning segment. The Extracellular segment spans residues aspartate 205–serine 210. N-linked (GlcNAc...) asparagine glycosylation is present at asparagine 208. A helical membrane pass occupies residues alanine 211–isoleucine 227. Topologically, residues proline 228 to aspartate 246 are cytoplasmic. Residues valine 247–phenylalanine 266 form a helical membrane-spanning segment. Residues methionine 267–serine 370 are Extracellular-facing. Cysteine 274 and cysteine 339 are joined by a disulfide. N-linked (GlcNAc...) asparagine glycosylation is found at asparagine 281, asparagine 294, and asparagine 341. Cysteine 348 and cysteine 354 form a disulfide bridge. Residues phenylalanine 371–leucine 395 constitute an intramembrane region (pore-forming). Over arginine 396–tyrosine 402 the chain is Extracellular. The helical transmembrane segment at methionine 403 to alanine 423 threads the bilayer. The Cytoplasmic segment spans residues valine 424–proline 612. One copy of the II repeat lies at cysteine 594 to glycine 866. A helical membrane pass occupies residues phenylalanine 613 to methionine 631. Residues glutamate 632–tyrosine 642 lie on the Extracellular side of the membrane. Residues methionine 643–lysine 662 form a helical membrane-spanning segment. The Cytoplasmic segment spans residues leucine 663–tryptophan 676. Residues asparagine 677 to valine 696 traverse the membrane as a helical segment. At glutamine 697–glycine 698 the chain is on the extracellular side. The helical transmembrane segment at leucine 699–serine 716 threads the bilayer. Over tryptophan 717–glycine 732 the chain is Cytoplasmic. The chain crosses the membrane as a helical span at residues alanine 733–valine 751. The Extracellular portion of the chain corresponds to glycine 752–aspartate 780. Cysteine 765 and cysteine 771 are oxidised to a cystine. The segment at residues phenylalanine 781 to tryptophan 801 is an intramembrane region (pore-forming). Topologically, residues aspartate 802–cysteine 812 are extracellular. Cysteine 803 and cysteine 812 are joined by a disulfide. A helical transmembrane segment spans residues leucine 813–phenylalanine 831. Residues leucine 832 to tryptophan 1071 lie on the Cytoplasmic side of the membrane. Disordered regions lie at residues arginine 884 to methionine 905 and leucine 945 to aspartate 982. Residues serine 948 to glutamate 971 show a composition bias toward acidic residues. The III repeat unit spans residues lysine 1052–leucine 1366. The helical transmembrane segment at phenylalanine 1072–phenylalanine 1089 threads the bilayer. At glutamate 1090–isoleucine 1102 the chain is on the extracellular side. Residues valine 1103–leucine 1121 traverse the membrane as a helical segment. Topologically, residues lysine 1122–alanine 1135 are cytoplasmic. Residues tryptophan 1136–asparagine 1154 traverse the membrane as a helical segment. The Extracellular segment spans residues leucine 1155–glycine 1162. The helical transmembrane segment at proline 1163 to arginine 1181 threads the bilayer. Topologically, residues phenylalanine 1182–serine 1198 are cytoplasmic. A helical transmembrane segment spans residues isoleucine 1199–valine 1218. Over asparagine 1219 to valine 1270 the chain is Extracellular. A disulfide bond links cysteine 1228 and cysteine 1248. N-linked (GlcNAc...) asparagine glycans are attached at residues asparagine 1230 and asparagine 1244. The segment at residues alanine 1271–proline 1292 is an intramembrane region (pore-forming). Residues alanine 1293–leucine 1309 are Extracellular-facing. Residues tyrosine 1310–isoleucine 1331 traverse the membrane as a helical segment. Residues glycine 1332–phenylalanine 1394 lie on the Cytoplasmic side of the membrane. The important for rapid channel inactivation stretch occupies residues isoleucine 1350–methionine 1352. The IV repeat unit spans residues isoleucine 1375–glutamine 1673. Residues phenylalanine 1395–valine 1412 traverse the membrane as a helical segment. Topologically, residues glutamate 1413–aspartate 1423 are extracellular. A helical transmembrane segment spans residues phenylalanine 1424 to leucine 1442. The Cytoplasmic portion of the chain corresponds to lysine 1443–asparagine 1454. The chain crosses the membrane as a helical span at residues glycine 1455 to methionine 1472. Residues leucine 1473–threonine 1485 lie on the Extracellular side of the membrane. A helical membrane pass occupies residues leucine 1486–isoleucine 1502. The Cytoplasmic portion of the chain corresponds to lysine 1503–alanine 1521. Residues leucine 1522–phenylalanine 1539 form a helical membrane-spanning segment. Residues glycine 1540–threonine 1561 lie on the Extracellular side of the membrane. Residues phenylalanine 1562–proline 1584 constitute an intramembrane region (pore-forming). Residues methionine 1585–glycine 1614 are Extracellular-facing. Cysteines 1593 and 1608 form a disulfide. The helical transmembrane segment at methionine 1615–isoleucine 1637 threads the bilayer. The Cytoplasmic portion of the chain corresponds to leucine 1638–valine 1892. The IQ domain occupies glutamate 1767–serine 1796. Positions arginine 1836–glutamate 1856 are disordered.

Belongs to the sodium channel (TC 1.A.1.10) family. Nav1.4/SCN4A subfamily. As to quaternary structure, voltage-gated sodium (Nav) channels consist of an ion-conducting alpha subunit which is functional on its own associated with regulatory beta subunits.

Its subcellular location is the cell membrane. The enzyme catalyses Na(+)(in) = Na(+)(out). Its function is as follows. Pore-forming subunit of a voltage-gated sodium (Nav) channel that directly mediates the depolarizing phase of action potentials in excitable membranes. Navs, also called VGSCs (voltage-gated sodium channels) or VDSCs (voltage-dependent sodium channels), operate by switching between closed and open conformations depending on the voltage difference across the membrane. In the open conformation they allow Na(+) ions to selectively pass through the pore, along their electrochemical gradient. The influx of Na+ ions provokes membrane depolarization, initiating the propagation of electrical signals throughout cells and tissues. This Takifugu rubripes (Japanese pufferfish) protein is Sodium channel protein type 4 subunit alpha A (scn4aa).